A 236-amino-acid polypeptide reads, in one-letter code: Biosynthetic peptidoglycan transglycosylase (236 aa).

Residues 12–31 form a helical membrane-spanning segment; the sequence is ALLWFAAGSVLVVLVLRWVP.

Belongs to the glycosyltransferase 51 family.

It localises to the cell inner membrane. The enzyme catalyses [GlcNAc-(1-&gt;4)-Mur2Ac(oyl-L-Ala-gamma-D-Glu-L-Lys-D-Ala-D-Ala)](n)-di-trans,octa-cis-undecaprenyl diphosphate + beta-D-GlcNAc-(1-&gt;4)-Mur2Ac(oyl-L-Ala-gamma-D-Glu-L-Lys-D-Ala-D-Ala)-di-trans,octa-cis-undecaprenyl diphosphate = [GlcNAc-(1-&gt;4)-Mur2Ac(oyl-L-Ala-gamma-D-Glu-L-Lys-D-Ala-D-Ala)](n+1)-di-trans,octa-cis-undecaprenyl diphosphate + di-trans,octa-cis-undecaprenyl diphosphate + H(+). It functions in the pathway cell wall biogenesis; peptidoglycan biosynthesis. In terms of biological role, peptidoglycan polymerase that catalyzes glycan chain elongation from lipid-linked precursors. The chain is Biosynthetic peptidoglycan transglycosylase from Pseudomonas syringae pv. syringae (strain B728a).